Reading from the N-terminus, the 172-residue chain is Ribosome maturation factor RimM (172 aa).

Residues 96 to 168 (EGEFYYHQII…RVDVELMEGL (73 aa)) form the PRC barrel domain.

It belongs to the RimM family. In terms of assembly, binds ribosomal protein uS19.

It is found in the cytoplasm. Its function is as follows. An accessory protein needed during the final step in the assembly of 30S ribosomal subunit, possibly for assembly of the head region. Essential for efficient processing of 16S rRNA. May be needed both before and after RbfA during the maturation of 16S rRNA. It has affinity for free ribosomal 30S subunits but not for 70S ribosomes. This Streptococcus pyogenes serotype M6 (strain ATCC BAA-946 / MGAS10394) protein is Ribosome maturation factor RimM.